We begin with the raw amino-acid sequence, 240 residues long: DNA repair protein RecO (240 aa).

This sequence belongs to the RecO family.

Involved in DNA repair and RecF pathway recombination. In Pseudoalteromonas atlantica (strain T6c / ATCC BAA-1087), this protein is DNA repair protein RecO.